A 182-amino-acid chain; its full sequence is Dipetalodipin (182 aa).

A signal peptide spans 1-18; it reads MKTIIAAIFLGILMHAFA. 3 disulfides stabilise this stretch: Cys21–Cys134, Cys55–Cys181, and Cys87–Cys103.

Belongs to the calycin superfamily. Triabin family. In terms of tissue distribution, expressed in salivary glands.

The protein resides in the secreted. Its function is as follows. Inhibits platelet aggregation, vasoconstriction, and angiogenesis through binding to distinct eicosanoids involved in inflammation (acts as a scavenger), and has a role in inhibiting host innate immunity by impairing platelet-assisted formation of neutrophil extracellular traps (NETs). Inhibits platelet aggregation by collagen (IC(50)=30 nM), thromboxane A2 mimetic (TXA2 mimetic), or arachidonic acid (AA) without affecting aggregation induced by ADP, convulxin (GP6 agonist), PMA, and ristocetin (vWF-dependent platelet agglutinator). Binds with high affinity to TXA2, TXB2, prostaglandine H2 mimetic (PGH2 mimetic), PGD2, PGJ2, and PGF2alpha. Also interacts with 15(S)-hydroxyeicosatetraenoic acid (HETE), being the first calycin/lipocalin described to date to bind to a derivative of 15-lipoxygenase. Binding is not observed to other prostaglandins, leukotrienes, HETEs, lipids, and biogenic amines. It prevents contraction of rat uterus stimulated by PGF2alpha and induces relaxation of aorta previously contracted with TXA2 mimetic. In addition, it inhibits angiogenesis mediated by 15(S)-HETE and does not enhance inhibition of collagen-induced platelet aggregation by SQ29548 (TXA2 antagonist) and indomethacin. Also impairs platelet-assisted formation of neutrophil extracellular traps (NETs). NETs are web-like structures of DNA and proteins that play an important role in killing of pathogens. In addition, NETs are implicated in thrombus formation. In vivo, this protein exhibits antithrombotic activity in two distinct mice models that are highly dependent on platelets. It is noteworthy that it inhibits thrombosis without promoting excessive bleeding. This Dipetalogaster maximus (Blood-sucking bug) protein is Dipetalodipin.